Consider the following 468-residue polypeptide: Ribosomal protein uS12 methylthiotransferase RimO (468 aa).

The 115-residue stretch at 16–130 (NKIHFISLGC…ILSAIESRES (115 aa)) folds into the MTTase N-terminal domain. 6 residues coordinate [4Fe-4S] cluster: Cys25, Cys61, Cys93, Cys164, Cys168, and Cys171. One can recognise a Radical SAM core domain in the interval 150-382 (STPKHYAYLK…SQIQKRNVDK (233 aa)). The TRAM domain occupies 385–455 (QKLIGEKIEA…GYDLVGRVVK (71 aa)).

The protein belongs to the methylthiotransferase family. RimO subfamily. The cofactor is [4Fe-4S] cluster.

The protein resides in the cytoplasm. It carries out the reaction L-aspartate(89)-[ribosomal protein uS12]-hydrogen + (sulfur carrier)-SH + AH2 + 2 S-adenosyl-L-methionine = 3-methylsulfanyl-L-aspartate(89)-[ribosomal protein uS12]-hydrogen + (sulfur carrier)-H + 5'-deoxyadenosine + L-methionine + A + S-adenosyl-L-homocysteine + 2 H(+). Catalyzes the methylthiolation of an aspartic acid residue of ribosomal protein uS12. The polypeptide is Ribosomal protein uS12 methylthiotransferase RimO (Chlamydia pneumoniae (Chlamydophila pneumoniae)).